We begin with the raw amino-acid sequence, 358 residues long: 3-isopropylmalate dehydrogenase (358 aa).

Substrate contacts are provided by R92, R102, R130, and D224. Positions 224, 248, and 252 each coordinate Mg(2+). Residue 282 to 294 coordinates NAD(+); sequence GSAPDIAGQGIAN.

It belongs to the isocitrate and isopropylmalate dehydrogenases family. LeuB type 1 subfamily. Homodimer. It depends on Mg(2+) as a cofactor. Requires Mn(2+) as cofactor.

Its subcellular location is the cytoplasm. The enzyme catalyses (2R,3S)-3-isopropylmalate + NAD(+) = 4-methyl-2-oxopentanoate + CO2 + NADH. The protein operates within amino-acid biosynthesis; L-leucine biosynthesis; L-leucine from 3-methyl-2-oxobutanoate: step 3/4. Its function is as follows. Catalyzes the oxidation of 3-carboxy-2-hydroxy-4-methylpentanoate (3-isopropylmalate) to 3-carboxy-4-methyl-2-oxopentanoate. The product decarboxylates to 4-methyl-2 oxopentanoate. This is 3-isopropylmalate dehydrogenase from Bordetella pertussis (strain Tohama I / ATCC BAA-589 / NCTC 13251).